A 322-amino-acid chain; its full sequence is Protein-methionine-sulfoxide reductase catalytic subunit MsrP (322 aa).

The tat-type signal signal peptide spans Met-1–Ala-59. Mo-molybdopterin contacts are provided by residues Asn-79, Tyr-82–Glu-83, Cys-137, Thr-172, Asn-220, Arg-225, and Ser-236–Lys-238.

Belongs to the MsrP family. Heterodimer of a catalytic subunit (MsrP) and a heme-binding subunit (MsrQ). Mo-molybdopterin serves as cofactor. Predicted to be exported by the Tat system. The position of the signal peptide cleavage has not been experimentally proven.

Its subcellular location is the periplasm. The enzyme catalyses L-methionyl-[protein] + a quinone + H2O = L-methionyl-(S)-S-oxide-[protein] + a quinol. It carries out the reaction L-methionyl-[protein] + a quinone + H2O = L-methionyl-(R)-S-oxide-[protein] + a quinol. Functionally, part of the MsrPQ system that repairs oxidized periplasmic proteins containing methionine sulfoxide residues (Met-O), using respiratory chain electrons. Thus protects these proteins from oxidative-stress damage caused by reactive species of oxygen and chlorine generated by the host defense mechanisms. MsrPQ is essential for the maintenance of envelope integrity under bleach stress, rescuing a wide series of structurally unrelated periplasmic proteins from methionine oxidation. The catalytic subunit MsrP is non-stereospecific, being able to reduce both (R-) and (S-) diastereoisomers of methionine sulfoxide. In Xanthomonas campestris pv. campestris (strain ATCC 33913 / DSM 3586 / NCPPB 528 / LMG 568 / P 25), this protein is Protein-methionine-sulfoxide reductase catalytic subunit MsrP.